A 1142-amino-acid chain; its full sequence is E3 ubiquitin-protein ligase TRIM33 (1142 aa).

Residues 1–18 (MAENKGGGEAESGGGGSG) show a composition bias toward gly residues. The interval 1 to 132 (MAENKGGGEA…PGSSSGPPLG (132 aa)) is disordered. The segment at 1–163 (MAENKGGGEA…AEPKLLPCLH (163 aa)) is necessary for E3 ubiquitin-protein ligase activity and repression of SMAD4 signaling and transcriptional repression. Residues 19 to 42 (SAPVTAGAAGPTAQEAEPPLAAVL) show a composition bias toward low complexity. Residues 52–64 (RAGAEGGAAGPDD) show a composition bias toward gly residues. Residues 65–99 (GGVAAASSSSAPAASVPAASVGSAVPGGAASTPAP) show a composition bias toward low complexity. Positions 100–122 (AAAPAPAPAPAPAPAPAPAPAPA) are enriched in pro residues. The RING-type zinc finger occupies 141–201 (CAVCQQSLQS…VGVIRCPVCR (61 aa)). 2 consecutive B box-type zinc fingers follow at residues 228–275 (KSEQ…IRKK) and 287–328 (QRPV…YQFL). Zn(2+) contacts are provided by Cys233, Cys236, Cys257, His261, Cys292, His295, Cys315, and His320. Residues 315–417 (CQLLEHKEHR…QMKLLQQQND (103 aa)) form a necessary for oligomerization region. Positions 315–417 (CQLLEHKEHR…QMKLLQQQND (103 aa)) form a coiled coil. Residues Lys345, Lys350, Lys497, and Lys520 each participate in a glycyl lysine isopeptide (Lys-Gly) (interchain with G-Cter in SUMO2) cross-link. An Asymmetric dimethylarginine; alternate modification is found at Arg531. Residue Arg531 is modified to Omega-N-methylarginine; alternate. A Glycyl lysine isopeptide (Lys-Gly) (interchain with G-Cter in SUMO2) cross-link involves residue Lys543. Omega-N-methylarginine is present on Arg551. Asymmetric dimethylarginine is present on Arg593. An Asymmetric dimethylarginine; alternate modification is found at Arg607. Arg607 carries the post-translational modification Omega-N-methylarginine; alternate. Asymmetric dimethylarginine is present on residues Arg614 and Arg620. Disordered regions lie at residues 657 to 676 (PTSP…TSPS), 688 to 707 (NPEN…EDAG), and 718 to 834 (YISG…PPLS). Low complexity predominate over residues 738–774 (PSALSPGSSGLSNSHTPVRPPSTSSTGSRGSCGSSGR). Composition is skewed to basic and acidic residues over residues 775 to 794 (TAEK…KQEP) and 808 to 817 (KQEKTEDGRR). 2 positions are modified to N6-acetyllysine; alternate: Lys778 and Lys784. Glycyl lysine isopeptide (Lys-Gly) (interchain with G-Cter in SUMO2); alternate cross-links involve residues Lys778 and Lys784. Lys789 is covalently cross-linked (Glycyl lysine isopeptide (Lys-Gly) (interchain with G-Cter in SUMO2)). Glycyl lysine isopeptide (Lys-Gly) (interchain with G-Cter in SUMO2); alternate cross-links involve residues Lys791 and Lys808. Glycyl lysine isopeptide (Lys-Gly) (interchain with G-Cter in SUMO1); alternate cross-links involve residues Lys791 and Lys808. An N6-acetyllysine; alternate modification is found at Lys808. A Glycyl lysine isopeptide (Lys-Gly) (interchain with G-Cter in SUMO2) cross-link involves residue Lys811. Ser818 is modified (phosphoserine). Low complexity predominate over residues 822–834 (LSSPESSLTPPLS). Residue Thr830 is modified to Phosphothreonine. A Glycyl lysine isopeptide (Lys-Gly) (interchain with G-Cter in SUMO2) cross-link involves residue Lys876. Ser877 is modified (phosphoserine). The segment at 902 to 949 (EDWCAVCQNGGDLLCCEKCPKVFHLTCHVPTLLSFPSGDWICTFCRDI) adopts a PHD-type zinc-finger fold. N6-acetyllysine is present on Lys966. An N6-acetyllysine; alternate modification is found at Lys968. A Glycyl lysine isopeptide (Lys-Gly) (interchain with G-Cter in SUMO2); alternate cross-link involves residue Lys968. Residues 972 to 1095 (GLSPVDQRKC…LYFEDKLSEI (124 aa)) enclose the Bromo domain. Glycyl lysine isopeptide (Lys-Gly) (interchain with G-Cter in SUMO2) cross-links involve residues Lys1022 and Lys1058. Thr1066 is modified (phosphothreonine). Lys1072 participates in a covalent cross-link: Glycyl lysine isopeptide (Lys-Gly) (interchain with G-Cter in SUMO2). Positions 1103–1142 (PLPEFEQDEDDGEVTEDSDEDFIQPRRKRLKSDERPVHIK) are disordered. Positions 1107 to 1124 (FEQDEDDGEVTEDSDEDF) are enriched in acidic residues. Thr1117 is subject to Phosphothreonine. Ser1120 is modified (phosphoserine). Residue Lys1133 forms a Glycyl lysine isopeptide (Lys-Gly) (interchain with G-Cter in SUMO2) linkage. The segment covering 1133-1142 (KSDERPVHIK) has biased composition (basic and acidic residues). Position 1134 is a phosphoserine (Ser1134).

This sequence belongs to the TRIM/RBCC family. As to quaternary structure, homooligomer and heterooligomer with TRIM24 and TRIM28 family members. Interacts with SMAD4 in unstimulated cells. Found in a complex with SMAD2 and SMAD3 upon addition of TGF-beta. Interacts with SMAD2 and SMAD3. Interacts with SMAD4 under basal and induced conditions and, upon TGF-beta signaling, with activated SMAD2. Forms a ternary complex with SMAD4 and SMAD2 upon TGF-beta signaling. Post-translationally, sumoylated with SUMO1. In terms of tissue distribution, ubiquitous with high level in testis.

Its subcellular location is the nucleus. The catalysed reaction is S-ubiquitinyl-[E2 ubiquitin-conjugating enzyme]-L-cysteine + [acceptor protein]-L-lysine = [E2 ubiquitin-conjugating enzyme]-L-cysteine + N(6)-ubiquitinyl-[acceptor protein]-L-lysine.. Its pathway is protein modification; protein ubiquitination. Its function is as follows. Acts as an E3 ubiquitin-protein ligase. Promotes SMAD4 ubiquitination, nuclear exclusion and degradation via the ubiquitin proteasome pathway. May act as a transcriptional repressor. Inhibits the transcriptional response to TGF-beta/BMP signaling cascade. Plays a role in the control of cell proliferation. Its association with SMAD2 and SMAD3 stimulates erythroid differentiation of hematopoietic stem/progenitor. Monoubiquitinates SMAD4 and acts as an inhibitor of SMAD4-dependent TGF-beta/BMP signaling cascade (Monoubiquitination of SMAD4 hampers its ability to form a stable complex with activated SMAD2/3 resulting in inhibition of TGF-beta/BMP signaling cascade). The polypeptide is E3 ubiquitin-protein ligase TRIM33 (Trim33) (Mus musculus (Mouse)).